The following is a 154-amino-acid chain: Protein X (154 aa).

The tract at residues proline 68–phenylalanine 117 is mitochondrial targeting sequence.

The protein belongs to the orthohepadnavirus protein X family. In terms of assembly, may form homodimer. May interact with host CEBPA, CFLAR, CREB1, DDB1, E4F1, HBXIP, HSPD1/HSP60, NFKBIA, POLR2E and SMAD4. Interacts with host SMC5-SMC6 complex and induces its degradation. Interacts with host TRPC4AP; leading to prevent ubiquitination of TRPC4AP. Interacts with host PLSCR1; this interaction promotes ubiquitination and degradation of HBx and impairs HBx-mediated cell proliferation. Post-translationally, a fraction may be phosphorylated in insect cells and HepG2 cells, a human hepatoblastoma cell line. Phosphorylated in vitro by host protein kinase C or mitogen-activated protein kinase. N-acetylated in insect cells.

It localises to the host cytoplasm. The protein localises to the host nucleus. It is found in the host mitochondrion. Its function is as follows. Multifunctional protein that plays a role in silencing host antiviral defenses and promoting viral transcription. Does not seem to be essential for HBV infection. May be directly involved in development of cirrhosis and liver cancer (hepatocellular carcinoma). Most of cytosolic activities involve modulation of cytosolic calcium. The effect on apoptosis is controversial depending on the cell types in which the studies have been conducted. May induce apoptosis by localizing in mitochondria and causing loss of mitochondrial membrane potential. May also modulate apoptosis by binding host CFLAR, a key regulator of the death-inducing signaling complex (DISC). Promotes viral transcription by using the host E3 ubiquitin ligase DDB1 to target the SMC5-SMC6 complex to proteasomal degradation. This host complex would otherwise bind to viral episomal DNA, and prevents its transcription. Moderately stimulates transcription of many different viral and cellular transcription elements. Promoters and enhancers stimulated by HBx contain DNA binding sites for NF-kappa-B, AP-1, AP-2, c-EBP, ATF/CREB, or the calcium-activated factor NF-AT. In Homo sapiens (Human), this protein is Protein X.